Consider the following 237-residue polypeptide: MSNNLAIQLREGTSKSHSMAENVSFVKSFLSGVIDTNSYKKMMSNLYFVYKAMEEEMEYHKENDLIKPIYFVELNRSESLALDLNFYYGDTWKDIIEPSEATRVYINRIKKISKEKPLLLIAHAYTRYLGDLSGGQILKKIAQRALNVPNSQGLAFYEFDKIDDEQAFKQKYKKALDTLPVTDKMISQIVAEANIAFNLNMRMFQELEMSYIRIFTKILMQFLINSKDKLRVMLNFS.

Histidine 17 is a binding site for heme b.

The protein belongs to the heme oxygenase family.

It localises to the plastid. The protein localises to the chloroplast. The catalysed reaction is heme b + 3 reduced [NADPH--hemoprotein reductase] + 3 O2 = biliverdin IXalpha + CO + Fe(2+) + 3 oxidized [NADPH--hemoprotein reductase] + 3 H2O + H(+). In terms of biological role, catalyzes the opening of the heme ring with the release of iron. Key enzyme in the synthesis of the chromophoric part of the photosynthetic antennae. This is Heme oxygenase (pbsA) from Guillardia theta (Cryptophyte).